A 641-amino-acid polypeptide reads, in one-letter code: UPF0329 protein ECU11_0030 (641 aa).

Residues 358–387 (RQRKREEETERSVKELVGDEEKAKSKEEKA) show a composition bias toward basic and acidic residues. The tract at residues 358–444 (RQRKREEETE…KGGKKKSKGG (87 aa)) is disordered. The segment covering 435-444 (KGGKKKSKGG) has biased composition (basic residues).

It belongs to the UPF0329 family.

This chain is UPF0329 protein ECU11_0030, found in Encephalitozoon cuniculi (strain GB-M1) (Microsporidian parasite).